We begin with the raw amino-acid sequence, 450 residues long: Beclin-1 (450 aa).

The residue at position 1 (Met1) is an N-acetylmethionine. Phosphoserine occurs at positions 15 and 30. The interval 48 to 72 (TTAQAKPGETQEEETNSGEEPFIET) is disordered. Ser90, Ser93, and Ser96 each carry phosphoserine; by AMPK. Positions 108–127 (TMENLSRRLKVTGDLFDIMS) match the BH3 motif. An interaction with BCL2 and BCL2L1 region spans residues 112-159 (LSRRLKVTGDLFDIMSGQTDVDHPLCEECTDTLLDQLDTQLNVTENEC). Thr119 carries the phosphothreonine; by DAPK1 modification. The stretch at 142–269 (DTLLDQLDTQ…QLDKLKKTNV (128 aa)) forms a coiled coil. Residues 245-450 (DELKSVENQM…AWVSSQFYNK (206 aa)) are evolutionary conserved domain (ECD). Glycyl lysine isopeptide (Lys-Gly) (interchain with G-Cter in ubiquitin) cross-links involve residues Lys402 and Lys437. The segment at 425 to 450 (WTKALKFMLTNLKWGLAWVSSQFYNK) is required for membrane-association.

The protein belongs to the beclin family. As to quaternary structure, a homodimeric form is proposed to exist; this metastable form readily transits to ATG14- or UVRAG-containing complexes with BECN1:UVRAG being more stable than BECN1:ATG14. Component of the PI3K (PI3KC3/PI3K-III/class III phosphatidylinositol 3-kinase) complex the core of which is composed of the catalytic subunit PIK3C3, the regulatory subunit PIK3R4 and BECN1 associating with additional regulatory/auxiliary subunits to form alternative complex forms. Alternative complex forms containing a fourth regulatory subunit in a mutually exclusive manner are PI3K complex I (PI3KC3-C1) containing ATG14, and PI3K complex II (PI3KC3-C2) containing UVRAG. PI3KC3-C1 displays a V-shaped architecture with PIK3R4 serving as a bridge between PIK3C3 and the ATG14:BECN1 subcomplex. Both, PI3KC3-C1 and PI3KC3-C2, can associate with further regulatory subunits, such as RUBCN, SH3GLB1/Bif-1 and AMBRA1. PI3KC3-C1 probably associates with PIK3CB. Forms a complex with PPP2CA and AMBRA1; AMBRA1 and BECN1 components of the complex regulate MYC stability via different pathways. Component of the complex, at least composed of LRPPRC, BECN1 and BCL2; the interactions prevent BECN1 from forming an autophagy-inducing complex with PIK3C3. Interacts with AMBRA1, GOPC, GRID2. Interacts with BCL2 and BCL2L1 isoform Bcl-X(L); the interaction inhibits BECN1 function in promoting autophagy by interfering with the formation of the PI3K complex. Interacts with cytosolic HMGB1; inhibits the interaction of BECN1 and BCL2 leading to promotion of autophagy. Interacts with USP10, USP13, VMP1, DAPK1, RAB39A. Interacts with the poly-Gln domain of ATXN3; the interaction causes deubiquitination at Lys-402 and stabilizes BECN1. Interacts with SLAMF1. Interacts with TRIM5; the interaction causes activation of BECN1 by causing its dissociation from its inhibitors BCL2 and TAB2. Interacts with active ULK1 (phosphorylated on 'Ser-317') and MEFV simultaneously. Interacts with WDR81 and WDR91; negatively regulates the PI3 kinase/PI3K activity associated with endosomal membranes. Interacts with LAPTM4B; competes with EGFR for LAPTM4B binding; regulates EGFR activity. Interacts with TRIM50. Interacts with TRIM16. Interacts with ATG14; this interaction is increased in the absence of TMEM39A. Interacts with WASHC1; preventing interaction with AMBRA1 and the DCX(AMBRA1) complex and subsequent ubiquitination. Interacts with TRIM17. Interacts with BCL2L10/BCL-B (via BH1 domain). Interacts with SH3BGRL. Interacts with IRGM; enhancing BECN1-interacting partners and influencing the composition of the BECN1 complex. Interacts with ARMC3. Interacts with LRPPRC. In terms of processing, phosphorylation at Thr-119 by DAPK1 reduces its interaction with BCL2 and BCL2L1 and promotes induction of autophagy. In response to autophagic stimuli, phosphorylated at serine residues by AMPK in an ATG14-dependent manner, and this phosphorylation is critical for maximally efficient autophagy. Polyubiquitinated by NEDD4, both with 'Lys-11'- and 'Lys-63'-linkages. 'Lys-11'-linked polyubiquitination leads to degradation and is enhanced when the stabilizing interaction partner VPS34 is depleted. Deubiquitinated by USP10 and USP13, leading to stabilize the PIK3C3/VPS34-containing complexes. Polyubiquitinated at Lys-402 with 'Lys-48'-linkages. 'Lys-48'-linked polyubiquitination of Lys-402 leads to degradation. Deubiquitinated by ATXN3, leading to stabilization. Ubiquitinated at Lys-437 via 'Lys-63'-linkage by the DCX(AMBRA1) complex, thereby increasing the association between BECN1 and PIK3C3 to promote PIK3C3 activity. 'Lys-48'-linked ubiquitination by RNF216 leads to proteasomal degradation and autophagy inhibition. Post-translationally, proteolytically processed by caspases including CASP8 and CASP3; the C-terminal fragments lack autophagy-inducing capacity and are proposed to induce apoptosis. Thus the cleavage is proposed to be an determinant to switch from autophagy to apoptosis pathways affecting cellular homeostasis including viral infections and survival of tumor cells.

The protein resides in the cytoplasm. It localises to the golgi apparatus. The protein localises to the trans-Golgi network membrane. Its subcellular location is the endosome membrane. It is found in the endoplasmic reticulum membrane. The protein resides in the mitochondrion membrane. It localises to the cytoplasmic vesicle. The protein localises to the autophagosome. Its subcellular location is the mitochondrion. It is found in the nucleus. Functionally, plays a central role in autophagy. Acts as a core subunit of the PI3K complex that mediates formation of phosphatidylinositol 3-phosphate; different complex forms are believed to play a role in multiple membrane trafficking pathways: PI3KC3-C1 is involved in initiation of autophagosomes and PI3KC3-C2 in maturation of autophagosomes and endocytosis. Involved in regulation of degradative endocytic trafficking and required for the abscission step in cytokinesis, probably in the context of PI3KC3-C2. Essential for the formation of PI3KC3-C2 but not PI3KC3-C1 PI3K complex forms. Involved in endocytosis. May play a role in antiviral host defense. In terms of biological role, beclin-1-C 35 kDa localized to mitochondria can promote apoptosis; it induces the mitochondrial translocation of BAX and the release of proapoptotic factors. The protein is Beclin-1 (BECN1) of Pongo abelii (Sumatran orangutan).